Here is a 336-residue protein sequence, read N- to C-terminus: UbiA prenyltransferase domain-containing protein 1 (336 aa).

At Ala-2 the chain carries N-acetylalanine. 8 helical membrane passes run Leu-81–Thr-101, Phe-132–Ala-152, Leu-158–Phe-178, Leu-186–Gly-206, Ser-207–Leu-227, Ile-243–Val-265, Thr-275–Glu-295, and Leu-313–Leu-333.

This sequence belongs to the UbiA prenyltransferase family. As to quaternary structure, interacts with HMGCR and SOAT1.

It is found in the endoplasmic reticulum membrane. Its subcellular location is the golgi apparatus membrane. It localises to the mitochondrion membrane. The catalysed reaction is menadiol + (2E,6E,10E)-geranylgeranyl diphosphate = menaquinol-4 + diphosphate. The enzyme catalyses all-trans-decaprenyl diphosphate + 4-hydroxybenzoate = 4-hydroxy-3-(all-trans-decaprenyl)benzoate + diphosphate. It participates in quinol/quinone metabolism; menaquinone biosynthesis. Its pathway is cofactor biosynthesis; ubiquinone biosynthesis. Its function is as follows. Prenyltransferase that mediates the formation of menaquinone-4 (MK-4) and coenzyme Q10. MK-4 is a vitamin K2 isoform required for endothelial cell development. Mediates the conversion of phylloquinone (PK) into MK-4, probably by cleaving the side chain of phylloquinone (PK) to release 2-methyl-1,4-naphthoquinone (menadione; K3) and then prenylating it with geranylgeranyl pyrophosphate (GGPP) to form MK-4. Also plays a role in cardiovascular development independently of MK-4 biosynthesis, by acting as a coenzyme Q10 biosynthetic enzyme: coenzyme Q10, also named ubiquinone, plays an important antioxidant role in the cardiovascular system. Mediates biosynthesis of coenzyme Q10 in the Golgi membrane, leading to protect cardiovascular tissues from NOS3/eNOS-dependent oxidative stress. This is UbiA prenyltransferase domain-containing protein 1 (Ubiad1) from Mus musculus (Mouse).